A 353-amino-acid polypeptide reads, in one-letter code: Ferredoxin--NADP reductase (353 aa).

FAD contacts are provided by threonine 25, glutamate 44, glutamine 52, tyrosine 57, valine 97, phenylalanine 132, aspartate 298, and serine 339.

The protein belongs to the ferredoxin--NADP reductase type 2 family. In terms of assembly, homodimer. FAD serves as cofactor.

It carries out the reaction 2 reduced [2Fe-2S]-[ferredoxin] + NADP(+) + H(+) = 2 oxidized [2Fe-2S]-[ferredoxin] + NADPH. This Chlorobium chlorochromatii (strain CaD3) protein is Ferredoxin--NADP reductase.